The sequence spans 831 residues: von Willebrand factor A domain-containing protein DDB_G0285981 (831 aa).

The VIT domain occupies 60 to 188; that stretch reads RDTFGLKTFS…NVTIHLTIIS (129 aa). The VWFA domain occupies 312-480; it reads EFIFLIDCSG…NFEEQVMKLV (169 aa).

This chain is von Willebrand factor A domain-containing protein DDB_G0285981, found in Dictyostelium discoideum (Social amoeba).